Reading from the N-terminus, the 111-residue chain is uncharacterized protein (111 aa).

This is an uncharacterized protein from Streptomyces coelicolor (strain ATCC BAA-471 / A3(2) / M145).